Here is a 397-residue protein sequence, read N- to C-terminus: MMMMSGRPSGGAGGGRYPFTASQWQELEHQALIYKYMASGTPIPSDLILPLRRSFLLDSALATSPSLAFPPQPSLGWGCFGMGFGRKAEDPEPGRCRRTDGKKWRCSKEAYPDSKYCEKHMHRGKNRSRKPVEMSLATPPPPSSSATSAASNTSAGVAPTTTTTSSPAPSYSRPAPHDAAPYQALYGGPYAAATARTPAAAAYHAQVSPFHLQLDTTHPHPPPSYYSMDHKEYAYGHATKEVHGEHAFFSDGTEREHHHAAAGHGQWQFKQLGMEPKQSTTPLFPGAGYGHTAASPYAIDLSKEDDDEKERRQQQQQQQQQHCFLLGADLRLEKPAGHDHAAAAQKPLRHFFDEWPHEKNSKGSWMGLEGETQLSMSIPMAANDLPITTTSRYHNDD.

The QLQ domain occupies 18-53 (PFTASQWQELEHQALIYKYMASGTPIPSDLILPLRR). 2 short sequence motifs (bipartite nuclear localization signal) span residues 86 to 105 (RKAEDPEPGRCRRTDGKKWR) and 123 to 130 (RGKNRSRK). The WRC domain maps to 90-134 (DPEPGRCRRTDGKKWRCSKEAYPDSKYCEKHMHRGKNRSRKPVEM). A disordered region spans residues 117–176 (CEKHMHRGKNRSRKPVEMSLATPPPPSSSATSAASNTSAGVAPTTTTTSSPAPSYSRPAP). A compositionally biased stretch (basic residues) spans 120-129 (HMHRGKNRSR). The span at 144-174 (SSATSAASNTSAGVAPTTTTTSSPAPSYSRP) shows a compositional bias: low complexity.

It belongs to the GRF family.

It localises to the nucleus. Transcription activator that plays a regulatory role in gibberellin-induced stem elongation. This Oryza sativa subsp. japonica (Rice) protein is Growth-regulating factor 1 (GRF1).